The chain runs to 142 residues: MGVMDGLWRWLGVEREEVREEIIELPAYSEENQRGPTNVVSIHSNKTFKVVVCEPESFDEVQVLADHLKSRKQLILNFDNTPPEVSQRIIDFISGTTYSLEGHSQQLGKNIFIFTPSNVEIAKDHRSLMRKHGFANPFGGEK.

It belongs to the SepF family. Homodimer. Interacts with FtsZ.

It localises to the cytoplasm. In terms of biological role, cell division protein that is part of the divisome complex and is recruited early to the Z-ring. Probably stimulates Z-ring formation, perhaps through the cross-linking of FtsZ protofilaments. Its function overlaps with FtsA. The polypeptide is Cell division protein SepF (Syntrophomonas wolfei subsp. wolfei (strain DSM 2245B / Goettingen)).